The sequence spans 415 residues: Homoserine O-acetyltransferase (415 aa).

The AB hydrolase-1 domain occupies 47 to 369 (NAVLVCHGLT…HGHDAFLVEP (323 aa)). The active-site Nucleophile is Ser155. Arg226 serves as a coordination point for substrate. Active-site residues include Asp329 and His362. Asp363 is a binding site for substrate. A disordered region spans residues 383–415 (GVAGRAVTDTAPDGGEPDEDEDFAPVHSSLFSR).

Belongs to the AB hydrolase superfamily. MetX family. As to quaternary structure, homodimer.

It localises to the cytoplasm. The enzyme catalyses L-homoserine + acetyl-CoA = O-acetyl-L-homoserine + CoA. Its pathway is amino-acid biosynthesis; L-methionine biosynthesis via de novo pathway; O-acetyl-L-homoserine from L-homoserine: step 1/1. Transfers an acetyl group from acetyl-CoA to L-homoserine, forming acetyl-L-homoserine. The chain is Homoserine O-acetyltransferase from Haloferax volcanii (strain ATCC 29605 / DSM 3757 / JCM 8879 / NBRC 14742 / NCIMB 2012 / VKM B-1768 / DS2) (Halobacterium volcanii).